The following is a 461-amino-acid chain: Secreted 45 kDa protein (461 aa).

The first 27 residues, 1-27 (MKKKIISAILMSTVILSAAAPLSGVYA), serve as a signal peptide directing secretion. Low complexity predominate over residues 264–329 (SSASASSSQA…GNTNSGTSTG (66 aa)). Positions 264–343 (SSASASSSQA…TTTGGSGINS (80 aa)) are disordered. Positions 330 to 340 (NTGGTTTGGSG) are enriched in gly residues. One can recognise a Peptidase C51 domain in the interval 330 to 459 (NTGGTTTGGS…VSASGVTFLM (130 aa)).

This chain is Secreted 45 kDa protein (usp45), found in Lactococcus lactis subsp. cremoris (strain MG1363).